The chain runs to 196 residues: dTTP/UTP pyrophosphatase (196 aa).

Catalysis depends on aspartate 72, which acts as the Proton acceptor.

This sequence belongs to the Maf family. YhdE subfamily. The cofactor is a divalent metal cation.

It localises to the cytoplasm. The enzyme catalyses dTTP + H2O = dTMP + diphosphate + H(+). The catalysed reaction is UTP + H2O = UMP + diphosphate + H(+). Its function is as follows. Nucleoside triphosphate pyrophosphatase that hydrolyzes dTTP and UTP. May have a dual role in cell division arrest and in preventing the incorporation of modified nucleotides into cellular nucleic acids. The polypeptide is dTTP/UTP pyrophosphatase (Chlamydia caviae (strain ATCC VR-813 / DSM 19441 / 03DC25 / GPIC) (Chlamydophila caviae)).